The sequence spans 421 residues: MPSSVPWCLLLLAGLCCLVPSSLAEDLQGCAVQETHATAHDEEHLQEPAEHKIAPNLADFAFSLYRHVAHQSNTTNIFFSPVSIATAFALLSLGAKGDTHTQILEGLSFNLTELAEAQIHDGFQHLLNALNHSDNQLQLTTGNGLFIDESAKLLDKFLEDVKKLYHSEAFSINFRDTEEAKKQINDYVEKGTQGKIVDLVKDLDKDTVLALVNYIFFKGTWEKPFEPEYTTEQDFHVDEKTTVRVPMMHRLSSFDVQYSDTLSSWVLLLDYAGNATAFFILPDQGKLQHLEDTLTKGILARFLGNRHSSFVNVHLPKLSISGTYDLTSILPELGITKVFSRQADLSGITEEVPLTVSKALHKAVLTIDEKGTEAAGTTMWEIMPISLPPDLKFNRPFVLIIYDRNTKSPLFVGKVVDPTQK.

An N-terminal signal peptide occupies residues 1–24 (MPSSVPWCLLLLAGLCCLVPSSLA). 3 N-linked (GlcNAc...) asparagine glycosylation sites follow: N73, N110, and N274. The segment at 376-395 (GTTMWEIMPISLPPDLKFNR) is RCL.

Belongs to the serpin family. Post-translationally, N-glycosylated with carbohydrates having biantennary side chains. As to expression, plasma.

It localises to the secreted. Functionally, inhibitor of serine proteases. The sequence is that of Alpha-1-antiproteinase 2 from Equus caballus (Horse).